The following is a 101-amino-acid chain: Small ribosomal subunit protein uS14 (101 aa).

It belongs to the universal ribosomal protein uS14 family. As to quaternary structure, part of the 30S ribosomal subunit. Contacts proteins S3 and S10.

In terms of biological role, binds 16S rRNA, required for the assembly of 30S particles and may also be responsible for determining the conformation of the 16S rRNA at the A site. The sequence is that of Small ribosomal subunit protein uS14 from Opitutus terrae (strain DSM 11246 / JCM 15787 / PB90-1).